The sequence spans 273 residues: MSGMHGASREALAAARERLDALTDSTSVDAGSLADELAAVTALLHREVSLRRVLTDPAQSARPRPSSPSVSSAPRSAAPVDLVAGTVRSRWSQSRDLVDALEQLANIADLTAAQKRGRLDNVEDELFRFGRIISSNTELRAALTSRSATTAAKSELLAGLLGSRAERTTERLVTRLVTAPRGRSLESGLESLSKLAADRRDRMVAVVTSAVPLSDTQKQRLGAALAKVYGRPMHLNLDVDPEVLGGIRVQVGDEVINGSIADRLEDAGRRLAS.

Residues 55 to 78 are disordered; it reads TDPAQSARPRPSSPSVSSAPRSAA. Residues 57-78 are compositionally biased toward low complexity; it reads PAQSARPRPSSPSVSSAPRSAA.

This sequence belongs to the ATPase delta chain family. As to quaternary structure, F-type ATPases have 2 components, F(1) - the catalytic core - and F(0) - the membrane proton channel. F(1) has five subunits: alpha(3), beta(3), gamma(1), delta(1), epsilon(1). F(0) has three main subunits: a(1), b(2) and c(10-14). The alpha and beta chains form an alternating ring which encloses part of the gamma chain. F(1) is attached to F(0) by a central stalk formed by the gamma and epsilon chains, while a peripheral stalk is formed by the delta and b chains.

It is found in the cell membrane. F(1)F(0) ATP synthase produces ATP from ADP in the presence of a proton or sodium gradient. F-type ATPases consist of two structural domains, F(1) containing the extramembraneous catalytic core and F(0) containing the membrane proton channel, linked together by a central stalk and a peripheral stalk. During catalysis, ATP synthesis in the catalytic domain of F(1) is coupled via a rotary mechanism of the central stalk subunits to proton translocation. Its function is as follows. This protein is part of the stalk that links CF(0) to CF(1). It either transmits conformational changes from CF(0) to CF(1) or is implicated in proton conduction. This is ATP synthase subunit delta from Streptomyces lividans.